The sequence spans 239 residues: Ribosomal RNA small subunit methyltransferase G (239 aa).

S-adenosyl-L-methionine contacts are provided by residues Gly-79, Phe-84, 130–131 (AE), and Arg-149.

It belongs to the methyltransferase superfamily. RNA methyltransferase RsmG family.

It is found in the cytoplasm. Functionally, specifically methylates the N7 position of a guanine in 16S rRNA. This chain is Ribosomal RNA small subunit methyltransferase G, found in Pelotomaculum thermopropionicum (strain DSM 13744 / JCM 10971 / SI).